Reading from the N-terminus, the 862-residue chain is Probable disease resistance protein At5g43740 (862 aa).

Residues 24–61 adopt a coiled-coil conformation; it reads RNYIHMMESNLDALQKTMEELKNGRDDLLGRVSIEEDK. One can recognise an NB-ARC domain in the interval 135–438; sequence MVAQEIIHKV…CEGFINPNRY (304 aa). 178–185 serves as a coordination point for ATP; sequence GMGGVGKT. LRR repeat units lie at residues 511–532, 533–555, 558–580, and 582–604; these read IVRT…SKCP, NLST…FFRF, KLVV…ISNL, and SLQY…KKLR.

Belongs to the disease resistance NB-LRR family.

Functionally, probable disease resistance protein. The sequence is that of Probable disease resistance protein At5g43740 from Arabidopsis thaliana (Mouse-ear cress).